The sequence spans 285 residues: MKTQMTRDNLATARTLSEALPYLQRFNDAVVVVKFGGNAMGDDAEMASFARDMVLLRQVGVNPVVVHGGGPMINDMLAKLGIESTFLNGKRVTDAATVDVVEMVLSGRVNKRIVQAINAQGGKAVGLSGKDANLITCVPADPELGFVGDPSQVDPSVINTLFEDDIIPVIAPLGQGAEGETYNINGDTAAGAIASALQADRLLLLTNVSGVKNAAGDVVTELTAADVDAMVADGTIAGGMIPKTETALQAVRTGVRACIIVDGRVPNAVLLELFTEHGAGSMIRA.

Substrate is bound by residues 69-70 (GG), Arg91, and Asn183.

Belongs to the acetylglutamate kinase family. ArgB subfamily.

The protein resides in the cytoplasm. The enzyme catalyses N-acetyl-L-glutamate + ATP = N-acetyl-L-glutamyl 5-phosphate + ADP. It participates in amino-acid biosynthesis; L-arginine biosynthesis; N(2)-acetyl-L-ornithine from L-glutamate: step 2/4. Its function is as follows. Catalyzes the ATP-dependent phosphorylation of N-acetyl-L-glutamate. The polypeptide is Acetylglutamate kinase (Jannaschia sp. (strain CCS1)).